The primary structure comprises 333 residues: Cytochrome f (333 aa).

A signal peptide spans 1-44 (MRNACTRARLTRTARAMVKTLFIAIASVTFFFTSDLALPQSAAA). The heme site is built by Y45, C66, C69, and H70. A helical membrane pass occupies residues 299 to 318 (VGWLIAFVALVMLAQVMLVL).

It belongs to the cytochrome f family. In terms of assembly, the 4 large subunits of the cytochrome b6-f complex are cytochrome b6, subunit IV (17 kDa polypeptide, PetD), cytochrome f and the Rieske protein, while the 4 small subunits are PetG, PetL, PetM and PetN. The complex functions as a dimer. It depends on heme as a cofactor.

It localises to the cellular thylakoid membrane. In terms of biological role, component of the cytochrome b6-f complex, which mediates electron transfer between photosystem II (PSII) and photosystem I (PSI), cyclic electron flow around PSI, and state transitions. The chain is Cytochrome f from Nostoc sp. (strain PCC 7120 / SAG 25.82 / UTEX 2576).